A 382-amino-acid polypeptide reads, in one-letter code: Dual-specificity RNA methyltransferase RlmN (382 aa).

E96 (proton acceptor) is an active-site residue. Positions 102–340 (QNGRGTLCVS…VTVRTTRGDD (239 aa)) constitute a Radical SAM core domain. C109 and C345 are disulfide-bonded. [4Fe-4S] cluster is bound by residues C116, C120, and C123. S-adenosyl-L-methionine is bound by residues 170 to 171 (GE), S202, 224 to 226 (SLH), and N302. C345 acts as the S-methylcysteine intermediate in catalysis.

It belongs to the radical SAM superfamily. RlmN family. The cofactor is [4Fe-4S] cluster.

Its subcellular location is the cytoplasm. The enzyme catalyses adenosine(2503) in 23S rRNA + 2 reduced [2Fe-2S]-[ferredoxin] + 2 S-adenosyl-L-methionine = 2-methyladenosine(2503) in 23S rRNA + 5'-deoxyadenosine + L-methionine + 2 oxidized [2Fe-2S]-[ferredoxin] + S-adenosyl-L-homocysteine. The catalysed reaction is adenosine(37) in tRNA + 2 reduced [2Fe-2S]-[ferredoxin] + 2 S-adenosyl-L-methionine = 2-methyladenosine(37) in tRNA + 5'-deoxyadenosine + L-methionine + 2 oxidized [2Fe-2S]-[ferredoxin] + S-adenosyl-L-homocysteine. Functionally, specifically methylates position 2 of adenine 2503 in 23S rRNA and position 2 of adenine 37 in tRNAs. m2A2503 modification seems to play a crucial role in the proofreading step occurring at the peptidyl transferase center and thus would serve to optimize ribosomal fidelity. The sequence is that of Dual-specificity RNA methyltransferase RlmN from Ectopseudomonas mendocina (strain ymp) (Pseudomonas mendocina).